Consider the following 204-residue polypeptide: Peptide deformylase (204 aa).

Residues Cys131 and His174 each coordinate Fe cation. Glu175 is an active-site residue. A Fe cation-binding site is contributed by His178.

Belongs to the polypeptide deformylase family. Requires Fe(2+) as cofactor.

It carries out the reaction N-terminal N-formyl-L-methionyl-[peptide] + H2O = N-terminal L-methionyl-[peptide] + formate. Its function is as follows. Removes the formyl group from the N-terminal Met of newly synthesized proteins. Requires at least a dipeptide for an efficient rate of reaction. N-terminal L-methionine is a prerequisite for activity but the enzyme has broad specificity at other positions. In Streptococcus equi subsp. zooepidemicus (strain MGCS10565), this protein is Peptide deformylase.